The sequence spans 395 residues: S-adenosylmethionine synthase (395 aa).

Histidine 16 contributes to the ATP binding site. Mg(2+) is bound at residue aspartate 18. K(+) is bound at residue glutamate 44. Residues glutamate 57 and glutamine 100 each coordinate L-methionine. Positions 100–110 (QSPDIAQGVDD) are flexible loop. Residues 174-176 (DAK), 241-242 (RF), aspartate 250, 256-257 (RK), alanine 273, and lysine 277 contribute to the ATP site. Aspartate 250 is an L-methionine binding site. Lysine 281 contributes to the L-methionine binding site.

It belongs to the AdoMet synthase family. As to quaternary structure, homotetramer; dimer of dimers. Mg(2+) is required as a cofactor. K(+) serves as cofactor.

The protein localises to the cytoplasm. It catalyses the reaction L-methionine + ATP + H2O = S-adenosyl-L-methionine + phosphate + diphosphate. Its pathway is amino-acid biosynthesis; S-adenosyl-L-methionine biosynthesis; S-adenosyl-L-methionine from L-methionine: step 1/1. Catalyzes the formation of S-adenosylmethionine (AdoMet) from methionine and ATP. The overall synthetic reaction is composed of two sequential steps, AdoMet formation and the subsequent tripolyphosphate hydrolysis which occurs prior to release of AdoMet from the enzyme. In Levilactobacillus brevis (strain ATCC 367 / BCRC 12310 / CIP 105137 / JCM 1170 / LMG 11437 / NCIMB 947 / NCTC 947) (Lactobacillus brevis), this protein is S-adenosylmethionine synthase.